A 295-amino-acid chain; its full sequence is Autophagy-related protein 37 (295 aa).

Residues 5–103 (VDRVFVHALN…LIDTMHRYAT (99 aa)) enclose the ACB domain. Disordered regions lie at residues 124 to 162 (NSPSSSLSSPRPNQSTGAGAQQPQQEPEQASDGEGPLKE) and 174 to 201 (LRSQRQVDLEDDEVDVPTSDRSSGRWQR). Over residues 125–153 (SPSSSLSSPRPNQSTGAGAQQPQQEPEQA) the composition is skewed to low complexity. A glycan (N-linked (GlcNAc...) asparagine) is linked at Asn-136. Residues 244-264 (WLLVKHIFADLVILSVVLLWL) form a helical membrane-spanning segment.

The protein belongs to the ATG37 family.

It is found in the peroxisome membrane. Its function is as follows. Acyl-CoA binding protein which acts as the peroxisome receptor for pexophagy. Required for both micropexophagy and macropexophagy, but not for the cytoplasm to vacuole transport (Cvt) or autophagy pathways. Required for functional micropexophagic apparatus (MIPA) and relocation of ATG11 to the peroxisome-sequestering arms of the vacuole. Binds palmitoyl-CoA but not oleyl-CoA. This Gibberella zeae (strain ATCC MYA-4620 / CBS 123657 / FGSC 9075 / NRRL 31084 / PH-1) (Wheat head blight fungus) protein is Autophagy-related protein 37.